Here is a 310-residue protein sequence, read N- to C-terminus: UPF0324 membrane protein GSU2818 (310 aa).

Transmembrane regions (helical) follow at residues 11 to 33 (FTIL…VMGI), 53 to 72 (MLLQ…GEVI), 79 to 97 (IWYS…YGLG), 107 to 129 (SALI…APVL), 136 to 158 (TAVA…PLVG), 193 to 215 (ALAI…VMAA), 227 to 244 (IPLF…RTLL), 254 to 273 (LAGV…GAGL), and 286 to 308 (LVQA…KLPW).

This sequence belongs to the UPF0324 family.

It localises to the cell membrane. The polypeptide is UPF0324 membrane protein GSU2818 (Geobacter sulfurreducens (strain ATCC 51573 / DSM 12127 / PCA)).